The following is a 302-amino-acid chain: Beta-lactamase (302 aa).

Basic residues predominate over residues 1 to 11 (MADRRRVHAWA). A signal peptide spans 1–29 (MADRRRVHAWARARPAAPEPAPPTPSAAA). Residues 1–43 (MADRRRVHAWARARPAAPEPAPPTPSAAAPSVAPGPAATPPDP) are disordered. Positions 26 to 36 (SAAAPSVAPGP) are enriched in low complexity. Residue Ser-85 is the Acyl-ester intermediate of the active site. Ser-143 provides a ligand contact to substrate. Glu-179 (proton acceptor) is an active-site residue. 247-249 (KTG) lines the substrate pocket.

The protein belongs to the class-A beta-lactamase family.

The protein resides in the secreted. The enzyme catalyses a beta-lactam + H2O = a substituted beta-amino acid. Active on penicillins but not on cephalosporins. The sequence is that of Beta-lactamase (bla) from Amycolatopsis lactamdurans (Nocardia lactamdurans).